The chain runs to 216 residues: Small ribosomal subunit protein uS5 (216 aa).

The segment at 1–55 (MDRKLENQKDLLNQDPKVELNSQSVAKNPLNSREVKPIQRRRPLRKNSRDKNSKP) is disordered. Positions 20-31 (LNSQSVAKNPLN) are enriched in polar residues. The 64-residue stretch at 57–120 (FEERVIAIHR…KDAQNRLVSV (64 aa)) folds into the S5 DRBM domain.

It belongs to the universal ribosomal protein uS5 family. As to quaternary structure, part of the 30S ribosomal subunit. Contacts proteins S4 and S8.

With S4 and S12 plays an important role in translational accuracy. Functionally, located at the back of the 30S subunit body where it stabilizes the conformation of the head with respect to the body. This chain is Small ribosomal subunit protein uS5, found in Mesomycoplasma hyopneumoniae (strain J / ATCC 25934 / NCTC 10110) (Mycoplasma hyopneumoniae).